A 206-amino-acid polypeptide reads, in one-letter code: Cytidylate kinase (206 aa).

Residue 9–17 (GPAAAGKGT) participates in ATP binding.

Belongs to the cytidylate kinase family. Type 1 subfamily.

The protein localises to the cytoplasm. The enzyme catalyses CMP + ATP = CDP + ADP. It carries out the reaction dCMP + ATP = dCDP + ADP. This chain is Cytidylate kinase, found in Cereibacter sphaeroides (strain ATCC 17023 / DSM 158 / JCM 6121 / CCUG 31486 / LMG 2827 / NBRC 12203 / NCIMB 8253 / ATH 2.4.1.) (Rhodobacter sphaeroides).